We begin with the raw amino-acid sequence, 186 residues long: Large ribosomal subunit protein uL5 (186 aa).

The protein belongs to the universal ribosomal protein uL5 family. In terms of assembly, part of the 50S ribosomal subunit; part of the 5S rRNA/L5/L18/L25 subcomplex. Contacts the 5S rRNA and the P site tRNA. Forms a bridge to the 30S subunit in the 70S ribosome.

In terms of biological role, this is one of the proteins that bind and probably mediate the attachment of the 5S RNA into the large ribosomal subunit, where it forms part of the central protuberance. In the 70S ribosome it contacts protein S13 of the 30S subunit (bridge B1b), connecting the 2 subunits; this bridge is implicated in subunit movement. Contacts the P site tRNA; the 5S rRNA and some of its associated proteins might help stabilize positioning of ribosome-bound tRNAs. The chain is Large ribosomal subunit protein uL5 from Legionella pneumophila subsp. pneumophila (strain Philadelphia 1 / ATCC 33152 / DSM 7513).